A 765-amino-acid polypeptide reads, in one-letter code: Cullin-5 (765 aa).

Residues 696–757 (RELRVQEGIV…NKYMERRADD (62 aa)) form the Cullin neddylation domain. A Glycyl lysine isopeptide (Lys-Gly) (interchain with G-Cter in NEDD8) cross-link involves residue lysine 709.

Belongs to the cullin family. Interacts with rbx-1 and rbx-2. Neddylated; which enhances the ubiquitination activity of SCF-like complex.

The protein operates within protein modification; protein ubiquitination. Its function is as follows. Probable core component of cullin-based SCF-like E3 ubiquitin-protein ligase complexes which mediate the ubiquitination and subsequent proteasomal degradation of target proteins. In association with rbx-2 seems to be involved in meiotic cell cycle progression in the germline. Required for phosphorylation of the MAP kinase MPK-1 in the germline. The sequence is that of Cullin-5 (cul-5) from Caenorhabditis elegans.